The primary structure comprises 298 residues: N-acetylmuramic acid 6-phosphate etherase (298 aa).

In terms of domain architecture, SIS spans 55 to 218; that stretch reads IHAQVSGGGR…STGLMIKSGK (164 aa). Glu-83 (proton donor) is an active-site residue. Glu-114 is an active-site residue.

Belongs to the GCKR-like family. MurNAc-6-P etherase subfamily. In terms of assembly, homodimer.

The enzyme catalyses N-acetyl-D-muramate 6-phosphate + H2O = N-acetyl-D-glucosamine 6-phosphate + (R)-lactate. The protein operates within amino-sugar metabolism; 1,6-anhydro-N-acetylmuramate degradation. Its pathway is amino-sugar metabolism; N-acetylmuramate degradation. It participates in cell wall biogenesis; peptidoglycan recycling. Its function is as follows. Specifically catalyzes the cleavage of the D-lactyl ether substituent of MurNAc 6-phosphate, producing GlcNAc 6-phosphate and D-lactate. Together with AnmK, is also required for the utilization of anhydro-N-acetylmuramic acid (anhMurNAc) either imported from the medium or derived from its own cell wall murein, and thus plays a role in cell wall recycling. The polypeptide is N-acetylmuramic acid 6-phosphate etherase (Escherichia coli O81 (strain ED1a)).